The chain runs to 59 residues: Small integral membrane protein 30 (59 aa).

A signal peptide spans 1 to 24; that stretch reads MTSVSTQLSLVLMSLLLVLPVVEA. The Extracellular segment spans residues 25–29; the sequence is VEAGD. The chain crosses the membrane as a helical span at residues 30-50; it reads AIALLLGVVLSITGICACLGV. Over 51-59 the chain is Cytoplasmic; sequence YARKRNGQM.

In terms of assembly, interacts (via transmembrane domain) with antiviral protein MAVS (via transmembrane domain); the interaction disrupts MAVS interaction with RIGI and inhibits MAVS aggregation, resulting in the repression of type I interferon signaling and innate immune responses.

It localises to the endoplasmic reticulum membrane. It is found in the mitochondrion membrane. Its function is as follows. Negatively regulates antiviral innate immune responses. Disrupts the interaction of antiviral protein MAVS with innate immune receptor RIGI and inhibits MAVS aggregation, resulting in the repression of type I interferon signaling and innate immune responses. The protein is Small integral membrane protein 30 of Homo sapiens (Human).